The primary structure comprises 338 residues: tRNA(Ile)-lysidine synthase (338 aa).

An ATP-binding site is contributed by 23–28; sequence SGGLDS.

It belongs to the tRNA(Ile)-lysidine synthase family.

The protein localises to the cytoplasm. The enzyme catalyses cytidine(34) in tRNA(Ile2) + L-lysine + ATP = lysidine(34) in tRNA(Ile2) + AMP + diphosphate + H(+). Its function is as follows. Ligates lysine onto the cytidine present at position 34 of the AUA codon-specific tRNA(Ile) that contains the anticodon CAU, in an ATP-dependent manner. Cytidine is converted to lysidine, thus changing the amino acid specificity of the tRNA from methionine to isoleucine. In Helicobacter pylori (strain J99 / ATCC 700824) (Campylobacter pylori J99), this protein is tRNA(Ile)-lysidine synthase.